We begin with the raw amino-acid sequence, 843 residues long: Translation initiation factor IF-2 (843 aa).

2 disordered regions span residues 50 to 72 and 94 to 260; these read LKSSHKSKAEEPRKITLQRKTTS and QRSP…TGPV. The segment covering 96–135 has biased composition (basic and acidic residues); it reads SPEEIQAEQKREQDERRAAENAARDKVDADVRQRNEEQAR. Positions 139-173 are enriched in low complexity; that stretch reads TATAAAAPAAKAEPAPAAAAPAPAPVVADAPASED. Composition is skewed to basic and acidic residues over residues 174-203 and 227-236; these read AAARAAERKKDETRRNESRTRDDDRRRGEA and TTDEESDGAR. Over residues 237–250 the composition is skewed to basic residues; it reads RGRGGKGKLKKRNQ. The 174-residue stretch at 343–516 folds into the tr-type G domain; that stretch reads SRAPVVTVMG…EVLELTATPT (174 aa). The interval 352-359 is G1; it reads GHVDHGKT. 352 to 359 lines the GTP pocket; that stretch reads GHVDHGKT. The interval 377–381 is G2; it reads GITQH. Residues 398 to 401 are G3; it reads DTPG. GTP-binding positions include 398–402 and 452–455; these read DTPGH and NKID. A G4 region spans residues 452-455; that stretch reads NKID. Positions 488-490 are G5; the sequence is SAK.

The protein belongs to the TRAFAC class translation factor GTPase superfamily. Classic translation factor GTPase family. IF-2 subfamily.

Its subcellular location is the cytoplasm. Functionally, one of the essential components for the initiation of protein synthesis. Protects formylmethionyl-tRNA from spontaneous hydrolysis and promotes its binding to the 30S ribosomal subunits. Also involved in the hydrolysis of GTP during the formation of the 70S ribosomal complex. This is Translation initiation factor IF-2 from Pseudomonas putida (strain W619).